A 168-amino-acid chain; its full sequence is G/U mismatch-specific DNA glycosylase (168 aa).

It belongs to the uracil-DNA glycosylase (UDG) superfamily. TDG/mug family. Binds DNA as a monomer.

Its subcellular location is the cytoplasm. The enzyme catalyses Specifically hydrolyzes mismatched double-stranded DNA and polynucleotides, releasing free uracil.. Excises ethenocytosine and uracil, which can arise by alkylation or deamination of cytosine, respectively, from the corresponding mispairs with guanine in ds-DNA. It is capable of hydrolyzing the carbon-nitrogen bond between the sugar-phosphate backbone of the DNA and the mispaired base. The complementary strand guanine functions in substrate recognition. Required for DNA damage lesion repair in stationary-phase cells. This chain is G/U mismatch-specific DNA glycosylase, found in Escherichia coli O139:H28 (strain E24377A / ETEC).